Reading from the N-terminus, the 707-residue chain is Signal transducer and activator of transcription A (707 aa).

Residues 70–89 show a composition bias toward polar residues; the sequence is LNQSDQFNLGRSNNLTPRTN. The disordered stretch occupies residues 70–246; sequence LNQSDQFNLG…GNPNLSSPQP (177 aa). Residues 90 to 111 show a composition bias toward low complexity; the sequence is QLQQLQQQQQQQQQPQQQQQQQ. A compositionally biased stretch (polar residues) spans 112-121; that stretch reads TYGTQSPIHM. Low complexity predominate over residues 142 to 238; it reads QQSYNNNNSN…QQQQQQQQGN (97 aa). Positions 242–356 form a coiled coil; it reads SSPQPILDTI…IQSILNPQHS (115 aa). Residues 443–487 mediate DNA binding; sequence KFLAGTRKCSVNLKFGVNIRDLDNVTTTVESDASNPFVVITNECQ. An SH2 domain is found at 583–686; the sequence is WQEGIIYGYM…FLKLHKDTAL (104 aa). Tyr702 is modified (phosphotyrosine).

It belongs to the transcription factor STAT family. Monomer, in the absence of tyrosine phosphorylation. Homodimer, or heterodimer with another family member, when tyrosine phosphorylated. Post-translationally, tyrosine phosphorylated in response to cAMP. Not tyrosine phosphorylated in growing cells. Tyrosine phosphorylation is first detected at the tight mound stage, continues throughout the slug stage and early culmination, and starts to decrease at mid-culmination. Barely detectable in fruiting bodies.

It localises to the cytoplasm. The protein resides in the nucleus. Functionally, transcription factor that binds to 5'-TTGAATTGA-3' elements in the promoter region of target genes. Functions as a repressor of the ecmB gene. Regulates the differentiation of prestalk cells during development. The protein is Signal transducer and activator of transcription A (dstA) of Dictyostelium discoideum (Social amoeba).